Here is a 432-residue protein sequence, read N- to C-terminus: MISAAQLLDELMGRDRNLAPDEKRSNVRWDHESVCKYYLCGFCPAELFTNTRSDLGPCEKIHDENLRKQYEKSSRFMKVGYERDFLRYLQSLLAEVERRIRRGHARLALSQNQQSSGAAGPTGKNEEKIQVLTDKIDVLLQQIEELGSEGKVEEAQGMMKLVEQLKEERELLRSTTSTIESFAAQEKQMEVCEVCGAFLIVGDAQSRVDDHLMGKQHMGYAKIKATVEELKEKLRKRTEEPDRDERLKKEKQEREEREKEREREREERERKRRREEEEREKERARDRERRKRSRSRSRHSSRTSDRRCSRSRDHKRSRSRERRRSRSRDRRRSRSHDRSERKHRSRSRDRRRSKSRDRKSYKHRSKSRDREQDRKSKEKEKRGSDDKKSSVKSGSREKQSEDTNTESKESDTKNEVNGTSEDIKSEGDTQSN.

Met1 carries the N-acetylmethionine modification. Residues Ser3, Ser110, and Ser115 each carry the phosphoserine modification. A coiled-coil region spans residues 124–181 (KNEEKIQVLTDKIDVLLQQIEELGSEGKVEEAQGMMKLVEQLKEERELLRSTTSTIES). N6-acetyllysine is present on Lys231. The segment covering 234–287 (LRKRTEEPDRDERLKKEKQEREEREKEREREREERERKRRREEEEREKERARDR) has biased composition (basic and acidic residues). Residues 234 to 432 (LRKRTEEPDR…IKSEGDTQSN (199 aa)) form a disordered region. Positions 288–301 (ERRKRSRSRSRHSS) are enriched in basic residues. Residues 302 to 311 (RTSDRRCSRS) show a composition bias toward basic and acidic residues. Over residues 312–367 (RDHKRSRSRERRRSRSRDRRRSRSHDRSERKHRSRSRDRRRSKSRDRKSYKHRSKS) the composition is skewed to basic residues. Residues 368–414 (RDREQDRKSKEKEKRGSDDKKSSVKSGSREKQSEDTNTESKESDTKN) show a composition bias toward basic and acidic residues. Ser420 carries the post-translational modification Phosphoserine. A compositionally biased stretch (basic and acidic residues) spans 421–432 (EDIKSEGDTQSN). Lys424 participates in a covalent cross-link: Glycyl lysine isopeptide (Lys-Gly) (interchain with G-Cter in SUMO1); alternate. Lys424 is covalently cross-linked (Glycyl lysine isopeptide (Lys-Gly) (interchain with G-Cter in SUMO2); alternate). A phosphoserine mark is found at Ser425 and Ser431.

This sequence belongs to the Luc7 family. As to quaternary structure, may interact with SFRS1 and form homodimers. Interacts with JMJD6. Interacts with RBM25. Interacts with RSRC1 (via Arg/Ser-rich domain). Interacts with RRP1B. Phosphorylated in vitro by SRPK1, SRPK2 and CLK1. As to expression, widely expressed. Highest levels in heart, brain, pancreas, thymus, ovary, small intestine and peripheral blood leukocytes, as well as cerebellum, putamen and pituitary gland. Lowest levels in lung, liver and kidney. Also expressed in fetal tissues, including brain, heart, kidney, thymus and lung.

The protein resides in the nucleus speckle. In terms of biological role, binds cAMP regulatory element DNA sequence. May play a role in RNA splicing. This Homo sapiens (Human) protein is Luc7-like protein 3 (LUC7L3).